The sequence spans 297 residues: Ribosomal RNA small subunit methyltransferase H (297 aa).

S-adenosyl-L-methionine is bound by residues 37–39, aspartate 56, phenylalanine 87, aspartate 102, and histidine 109; that span reads GGH.

The protein belongs to the methyltransferase superfamily. RsmH family.

It is found in the cytoplasm. It carries out the reaction cytidine(1402) in 16S rRNA + S-adenosyl-L-methionine = N(4)-methylcytidine(1402) in 16S rRNA + S-adenosyl-L-homocysteine + H(+). Functionally, specifically methylates the N4 position of cytidine in position 1402 (C1402) of 16S rRNA. In Borrelia turicatae (strain 91E135), this protein is Ribosomal RNA small subunit methyltransferase H.